We begin with the raw amino-acid sequence, 230 residues long: Poxin (230 aa).

Catalysis depends on histidine 43, which acts as the Proton donor. Tyrosine 174 functions as the Shared with catalytic histidine of dimeric partner in the catalytic mechanism. Lysine 178 functions as the Proton acceptor; shared with catalytic histidine of dimeric partner in the catalytic mechanism.

This sequence belongs to the poxin family. As to quaternary structure, homodimer.

The catalysed reaction is 2',3'-cGAMP + H2O = Gp(2'-5')Ap(3') + H(+). Nuclease that cleaves host 2',3'-cGAMP. The chain is Poxin (P26) from Orgyia pseudotsugata multicapsid polyhedrosis virus (OpMNPV).